We begin with the raw amino-acid sequence, 580 residues long: 2-succinyl-5-enolpyruvyl-6-hydroxy-3-cyclohexene-1-carboxylate synthase (580 aa).

Belongs to the TPP enzyme family. MenD subfamily. As to quaternary structure, homodimer. The cofactor is Mg(2+). Requires Mn(2+) as cofactor. It depends on thiamine diphosphate as a cofactor.

The catalysed reaction is isochorismate + 2-oxoglutarate + H(+) = 5-enolpyruvoyl-6-hydroxy-2-succinyl-cyclohex-3-ene-1-carboxylate + CO2. It participates in quinol/quinone metabolism; 1,4-dihydroxy-2-naphthoate biosynthesis; 1,4-dihydroxy-2-naphthoate from chorismate: step 2/7. Its pathway is quinol/quinone metabolism; menaquinone biosynthesis. In terms of biological role, catalyzes the thiamine diphosphate-dependent decarboxylation of 2-oxoglutarate and the subsequent addition of the resulting succinic semialdehyde-thiamine pyrophosphate anion to isochorismate to yield 2-succinyl-5-enolpyruvyl-6-hydroxy-3-cyclohexene-1-carboxylate (SEPHCHC). This Listeria monocytogenes serotype 4b (strain F2365) protein is 2-succinyl-5-enolpyruvyl-6-hydroxy-3-cyclohexene-1-carboxylate synthase.